The primary structure comprises 1304 residues: Myosin-1 (1304 aa).

Residues 1 to 12 are compositionally biased toward basic residues; the sequence is MAIVKRGVRTKN. The tract at residues 1–24 is disordered; the sequence is MAIVKRGVRTKNKQSQQPSKSGIK. One can recognise a Myosin motor domain in the interval 36 to 730; the sequence is VGVSDLTLLS…TLFALEDMRD (695 aa). 129 to 136 is an ATP binding site; it reads GESGAGKT. Residue Ser364 is modified to Phosphoserine. The interval 413-496 is actin-binding; that stretch reads SIGILDIYGF…PGLFAALNDS (84 aa). IQ domains lie at 734 to 754 and 755 to 780; these read HNMA…KDDA and ARLI…YGNG. The TH1 domain occupies 788 to 978; that stretch reads RRRMSMLGSR…TVTVRQGLPG (191 aa). Disordered stretches follow at residues 963-1162 and 1214-1304; these read DSYK…TYKA and ECDP…DDDW. 2 stretches are compositionally biased toward polar residues: residues 964-983 and 1001-1012; these read SYKS…SQNP and RGSNMRSTSSYQ. Low complexity-rich tracts occupy residues 1029–1052, 1072–1096, and 1120–1140; these read QPPV…PQAQ, QPHA…PQAQ, and PSAP…KKNV. The span at 1141-1156 shows a compositional bias: pro residues; sequence APPPPPAAASPPPKPK. The SH3 domain maps to 1155-1217; that stretch reads PKFPTYKAAY…PAAYVVECDP (63 aa). 2 stretches are compositionally biased toward low complexity: residues 1217–1227 and 1236–1256; these read PPANSPAGNAK and LNSA…NGAG. Positions 1292 to 1304 are enriched in acidic residues; it reads DSDEEDEEDDDDW.

This sequence belongs to the TRAFAC class myosin-kinesin ATPase superfamily. Myosin family. Post-translationally, phosphorylation of the TEDS site (Ser-364) is required for the polarization of the actin cytoskeleton. Phosphorylation probably activates the myosin-I ATPase activity.

Its subcellular location is the cytoplasm. The protein localises to the cytoskeleton. It is found in the actin patch. In terms of biological role, type-I myosin implicated in the organization of the actin cytoskeleton. Required for proper actin cytoskeleton polarization. At the cell cortex, assembles in patch-like structures together with proteins from the actin-polymerizing machinery and promotes actin assembly. Functions as actin nucleation-promoting factor (NPF) for the Arp2/3 complex. In Debaryomyces hansenii (strain ATCC 36239 / CBS 767 / BCRC 21394 / JCM 1990 / NBRC 0083 / IGC 2968) (Yeast), this protein is Myosin-1 (MYO1).